We begin with the raw amino-acid sequence, 696 residues long: Transcriptional activator of proteases prtT (696 aa).

The disordered stretch occupies residues 106 to 126 (DVADGSGRPESSTSGDTIRPK). Positions 136–165 (CNTCRKLKTRCDLDPRGHACRRCLSLRIEC) form a DNA-binding region, zn(2)-C6 fungal-type.

This sequence belongs to the prtT family.

It is found in the nucleus. In terms of biological role, transcription factor required for protein utilization and degradation. Regulates transcription of major secreted proteases including a serine alkaline protease (alk1), a metalloprotease (mep), an aspergillopepsin (pep1), a sedolisin (sed2) and two dipeptidyl-peptidases (dppIV and dppV). However, it is not a virulence determinant in leukopenic mice. In Aspergillus fumigatus (strain ATCC MYA-4609 / CBS 101355 / FGSC A1100 / Af293) (Neosartorya fumigata), this protein is Transcriptional activator of proteases prtT (prtT).